Here is a 220-residue protein sequence, read N- to C-terminus: UPF0319 protein YccT (220 aa).

A signal peptide spans 1-20; it reads MKTGIVTTLIALCLPVSVFA.

It belongs to the UPF0319 family.

This chain is UPF0319 protein YccT, found in Shigella flexneri serotype 5b (strain 8401).